We begin with the raw amino-acid sequence, 431 residues long: STE20-related kinase adapter protein alpha (431 aa).

Phosphoserine occurs at positions 2 and 46. Disordered regions lie at residues 32-52 and 314-344; these read EQPP…SIAS and PSRS…SHPY. In terms of domain architecture, Protein kinase spans 69-379; it reads YELLTIIGKG…ASTLLNHSFF (311 aa). Residue T419 is modified to Phosphothreonine; by LKB1.

The protein belongs to the protein kinase superfamily. STE Ser/Thr protein kinase family. STE20 subfamily. Component of a trimeric complex composed of STK11/LKB1, STRAD (STRADA or STRADB) and CAB39/MO25 (CAB39/MO25alpha or CAB39L/MO25beta): the complex tethers STK11/LKB1 in the cytoplasm and stimulates its catalytic activity.

It localises to the nucleus. The protein localises to the cytoplasm. Functionally, pseudokinase which, in complex with CAB39/MO25 (CAB39/MO25alpha or CAB39L/MO25beta), binds to and activates STK11/LKB1. Adopts a closed conformation typical of active protein kinases and binds STK11/LKB1 as a pseudosubstrate, promoting conformational change of STK11/LKB1 in an active conformation. This chain is STE20-related kinase adapter protein alpha (Strada), found in Mus musculus (Mouse).